Consider the following 420-residue polypeptide: Subtilisin (420 aa).

Residues 1–31 form the signal peptide; that stretch reads MKRSGKIFTTAMLAVTLMMPAMGVSANEGNA. Residues 32–111 constitute a propeptide that is removed on maturation; sequence AAEGNEKFRV…DKPEALYNAM (80 aa). Glutamine 115 is a binding site for Ca(2+). Residues 118–420 enclose the Peptidase S8 domain; that stretch reads PWGIKAIYNN…ASGFGFATVQ (303 aa). Aspartate 145 acts as the Charge relay system in catalysis. Residue aspartate 154 coordinates Ca(2+). Residues histidine 182 and serine 360 each act as charge relay system in the active site.

The protein belongs to the peptidase S8 family. The cofactor is Ca(2+).

It is found in the secreted. It catalyses the reaction Hydrolysis of proteins with broad specificity for peptide bonds, and a preference for a large uncharged residue in P1. Hydrolyzes peptide amides.. Its function is as follows. Subtilisin is an extracellular alkaline serine protease, it catalyzes the hydrolysis of proteins and peptide amides. This chain is Subtilisin (sub1), found in Bacillus sp. (strain TA39).